A 161-amino-acid chain; its full sequence is Cyclic pyranopterin monophosphate synthase (161 aa).

Residues 73-75 (LCH) and 110-111 (ME) each bind substrate. Asp-125 is an active-site residue.

It belongs to the MoaC family. As to quaternary structure, homohexamer; trimer of dimers.

The catalysed reaction is (8S)-3',8-cyclo-7,8-dihydroguanosine 5'-triphosphate = cyclic pyranopterin phosphate + diphosphate. Its pathway is cofactor biosynthesis; molybdopterin biosynthesis. Its function is as follows. Catalyzes the conversion of (8S)-3',8-cyclo-7,8-dihydroguanosine 5'-triphosphate to cyclic pyranopterin monophosphate (cPMP). The polypeptide is Cyclic pyranopterin monophosphate synthase (Pseudomonas syringae pv. tomato (strain ATCC BAA-871 / DC3000)).